A 222-amino-acid chain; its full sequence is Coiled-coil domain-containing protein 43 (222 aa).

A Glycyl lysine isopeptide (Lys-Gly) (interchain with G-Cter in SUMO1) cross-link involves residue lysine 93. The stretch at 119–143 (SEEEKQRKAALLAQYADVTDEEDEA) forms a coiled coil. A disordered region spans residues 136 to 222 (VTDEEDEADK…KRTQKGERKR (87 aa)). At threonine 137 the chain carries Phosphothreonine. The span at 152–168 (STANVSSDRTLFRNTNV) shows a compositional bias: polar residues. Residues 172 to 209 (LNARKLERDSLRDESQRKKEQDKLQREKDKLAKQERKE) are compositionally biased toward basic and acidic residues. Residues 175-217 (RKLERDSLRDESQRKKEQDKLQREKDKLAKQERKEKEKKRTQK) adopt a coiled-coil conformation. Residues 210–222 (KEKKRTQKGERKR) show a composition bias toward basic residues.

It belongs to the CCDC43 family.

The chain is Coiled-coil domain-containing protein 43 (Ccdc43) from Mus musculus (Mouse).